We begin with the raw amino-acid sequence, 233 residues long: 2-C-methyl-D-erythritol 4-phosphate cytidylyltransferase (233 aa).

It belongs to the IspD/TarI cytidylyltransferase family. IspD subfamily.

The catalysed reaction is 2-C-methyl-D-erythritol 4-phosphate + CTP + H(+) = 4-CDP-2-C-methyl-D-erythritol + diphosphate. Its pathway is isoprenoid biosynthesis; isopentenyl diphosphate biosynthesis via DXP pathway; isopentenyl diphosphate from 1-deoxy-D-xylulose 5-phosphate: step 2/6. In terms of biological role, catalyzes the formation of 4-diphosphocytidyl-2-C-methyl-D-erythritol from CTP and 2-C-methyl-D-erythritol 4-phosphate (MEP). This Gloeobacter violaceus (strain ATCC 29082 / PCC 7421) protein is 2-C-methyl-D-erythritol 4-phosphate cytidylyltransferase.